The primary structure comprises 148 residues: Large ribosomal subunit protein uL15 (148 aa).

Residues 1–30 (MSTHKKKTRKLRGHVSHGHGRIGKHRKHPG) show a composition bias toward basic residues. The segment at 1-37 (MSTHKKKTRKLRGHVSHGHGRIGKHRKHPGGRGNAGG) is disordered.

Belongs to the universal ribosomal protein uL15 family.

The polypeptide is Large ribosomal subunit protein uL15 (RpL27A) (Tenebrio molitor (Yellow mealworm beetle)).